We begin with the raw amino-acid sequence, 245 residues long: Bax inhibitor 1 (245 aa).

Residues 1–30 (MADTANYINDRFQTFMNGLGDRYEPYVREH) are Cytoplasmic-facing. Residues 31-51 (LSKVYMVLGSTAAATAMGAML) traverse the membrane as a helical segment. Residues 52-55 (QMRD) lie on the Lumenal side of the membrane. A helical transmembrane segment spans residues 56-76 (FLDLGVLAAVATLVLVLGLHF). The Cytoplasmic segment spans residues 77 to 88 (YKDDGKNYYTRL). The chain crosses the membrane as a helical span at residues 89–109 (GMLYAFGFCSGQTLGPLLGYI). The Lumenal portion of the chain corresponds to 110 to 115 (CSINPA). The chain crosses the membrane as a helical span at residues 116–136 (IILSALTGTFVTFISLSLSAL). The Cytoplasmic portion of the chain corresponds to 137-142 (LAEQGK). The helical transmembrane segment at 143 to 163 (YLYLGGMLVSVINTMALLSLF) threads the bilayer. The Lumenal segment spans residues 164-169 (NMVFKS). Residues 170-190 (YFVQVTQLYVGVFVMAAFIVY) traverse the membrane as a helical segment. The Cytoplasmic segment spans residues 191-245 (DTQNIVEKCRNGNRDVVQHALDLFFDVLSMFRRLLIILTQKEERKQNERRQNKTK).

This sequence belongs to the BI1 family.

It is found in the endoplasmic reticulum membrane. Functionally, suppressor of apoptosis. Modulates unfolded protein response signaling. Negatively regulates autophagy and autophagosome formation, especially during periods of nutrient deprivation, and reduces cell survival during starvation. This chain is Bax inhibitor 1, found in Drosophila melanogaster (Fruit fly).